The sequence spans 132 residues: Protein KRTCAP2 homolog (132 aa).

The next 4 membrane-spanning stretches (helical) occupy residues 1–21, 35–55, 69–89, and 92–109; these read MAVP…LIFS, MATV…LTAV, AKLF…CGMV, and VCAT…YYIN.

It belongs to the KRTCAP2 family. In terms of assembly, component of the oligosaccharyltransferase (OST) complex.

It localises to the membrane. Its function is as follows. Subunit of the oligosaccharyl transferase (OST) complex that catalyzes the initial transfer of a defined glycan (Glc(3)Man(9)GlcNAc(2) in eukaryotes) from the lipid carrier dolichol-pyrophosphate to an asparagine residue within an Asn-X-Ser/Thr consensus motif in nascent polypeptide chains, the first step in protein N-glycosylation. N-glycosylation occurs cotranslationally and the complex associates with the Sec61 complex at the channel-forming translocon complex that mediates protein translocation across the endoplasmic reticulum (ER). All subunits are required for a maximal enzyme activity. The protein is Protein KRTCAP2 homolog of Aedes aegypti (Yellowfever mosquito).